The chain runs to 217 residues: 3-demethoxyubiquinol 3-hydroxylase (217 aa).

Residues Glu-66, Glu-96, His-99, Glu-148, Glu-180, and His-183 each coordinate Fe cation.

The protein belongs to the COQ7 family. Fe cation is required as a cofactor.

It is found in the cell membrane. The enzyme catalyses a 5-methoxy-2-methyl-3-(all-trans-polyprenyl)benzene-1,4-diol + AH2 + O2 = a 3-demethylubiquinol + A + H2O. Its pathway is cofactor biosynthesis; ubiquinone biosynthesis. Its function is as follows. Catalyzes the hydroxylation of 2-nonaprenyl-3-methyl-6-methoxy-1,4-benzoquinol during ubiquinone biosynthesis. This Xanthomonas campestris pv. campestris (strain 8004) protein is 3-demethoxyubiquinol 3-hydroxylase.